Reading from the N-terminus, the 83-residue chain is Exodeoxyribonuclease 7 small subunit (83 aa).

The protein belongs to the XseB family. Heterooligomer composed of large and small subunits.

It is found in the cytoplasm. The catalysed reaction is Exonucleolytic cleavage in either 5'- to 3'- or 3'- to 5'-direction to yield nucleoside 5'-phosphates.. Bidirectionally degrades single-stranded DNA into large acid-insoluble oligonucleotides, which are then degraded further into small acid-soluble oligonucleotides. The sequence is that of Exodeoxyribonuclease 7 small subunit from Bradyrhizobium diazoefficiens (strain JCM 10833 / BCRC 13528 / IAM 13628 / NBRC 14792 / USDA 110).